Here is a 146-residue protein sequence, read N- to C-terminus: Catabolic 3-dehydroquinase (146 aa).

Catalysis depends on Tyr24, which acts as the Proton acceptor. The substrate site is built by Asn78, His84, and Asp91. Catalysis depends on His104, which acts as the Proton donor. Substrate contacts are provided by residues 105-106 (IT) and Arg115.

It belongs to the type-II 3-dehydroquinase family. Homododecamer. Adopts a ring-like structure, composed of an arrangement of two hexameric rings stacked on top of one another.

It catalyses the reaction 3-dehydroquinate = 3-dehydroshikimate + H2O. It functions in the pathway aromatic compound metabolism; 3,4-dihydroxybenzoate biosynthesis; 3,4-dihydroxybenzoate from 3-dehydroquinate: step 1/2. Is involved in the catabolism of quinate. Allows the utilization of quinate as carbon source via the beta-ketoadipate pathway. This is Catabolic 3-dehydroquinase from Meyerozyma guilliermondii (strain ATCC 6260 / CBS 566 / DSM 6381 / JCM 1539 / NBRC 10279 / NRRL Y-324) (Yeast).